Here is a 202-residue protein sequence, read N- to C-terminus: Large ribosomal subunit protein uL18 (202 aa).

The protein belongs to the universal ribosomal protein uL18 family. Part of the 50S ribosomal subunit. Contacts the 5S and 23S rRNAs.

Its function is as follows. This is one of the proteins that bind and probably mediate the attachment of the 5S RNA into the large ribosomal subunit, where it forms part of the central protuberance. The protein is Large ribosomal subunit protein uL18 of Staphylothermus marinus (strain ATCC 43588 / DSM 3639 / JCM 9404 / F1).